The chain runs to 64 residues: MPKMKSHRGACKRFKATGSGKVKRERMNGSHNLEHKNRKRTRRLHQSTLVDSTKEKQIKRMILA.

The tract at residues 17 to 41 is disordered; it reads TGSGKVKRERMNGSHNLEHKNRKRT. Residues 25–35 are compositionally biased toward basic and acidic residues; that stretch reads ERMNGSHNLEH.

This sequence belongs to the bacterial ribosomal protein bL35 family.

This Chlorobaculum parvum (strain DSM 263 / NCIMB 8327) (Chlorobium vibrioforme subsp. thiosulfatophilum) protein is Large ribosomal subunit protein bL35.